The following is a 185-amino-acid chain: Alkyl hydroperoxide reductase AhpD (185 aa).

Residue Cys131 is the Proton donor of the active site. A disulfide bridge links Cys131 with Cys134. Residue Cys134 is the Cysteine sulfenic acid (-SOH) intermediate of the active site.

This sequence belongs to the AhpD family. In terms of assembly, homotrimer.

The enzyme catalyses N(6)-[(R)-dihydrolipoyl]-L-lysyl-[lipoyl-carrier protein] + a hydroperoxide = N(6)-[(R)-lipoyl]-L-lysyl-[lipoyl-carrier protein] + an alcohol + H2O. Its function is as follows. Antioxidant protein with alkyl hydroperoxidase activity. Required for the reduction of the AhpC active site cysteine residues and for the regeneration of the AhpC enzyme activity. This is Alkyl hydroperoxide reductase AhpD from Frankia alni (strain DSM 45986 / CECT 9034 / ACN14a).